The chain runs to 167 residues: MRYAGTAHKVGDHIDTDAIIPARFLVTTDAQKLGENCMEGLEHGWVARVKSGDIMVGGRNFGCGSSREHAPIAILGAGMPVVVAHSFARIFYRNGFNMGLLLLEVGDDVDKIADGDDIEVDAASGVITNRTTGATITCAPVPQSMRELLDTGGLVPYVRARLERENG.

This sequence belongs to the LeuD family. LeuD type 2 subfamily. In terms of assembly, heterodimer of LeuC and LeuD.

The enzyme catalyses (2R,3S)-3-isopropylmalate = (2S)-2-isopropylmalate. Its pathway is amino-acid biosynthesis; L-leucine biosynthesis; L-leucine from 3-methyl-2-oxobutanoate: step 2/4. Catalyzes the isomerization between 2-isopropylmalate and 3-isopropylmalate, via the formation of 2-isopropylmaleate. The protein is 3-isopropylmalate dehydratase small subunit of Nitratidesulfovibrio vulgaris (strain ATCC 29579 / DSM 644 / CCUG 34227 / NCIMB 8303 / VKM B-1760 / Hildenborough) (Desulfovibrio vulgaris).